A 350-amino-acid polypeptide reads, in one-letter code: Twinfilin-1 (350 aa).

The residue at position 2 (S2) is an N-acetylserine. The 138-residue stretch at 2–139 (SHQTGIQASE…SLHGYKKYLL (138 aa)) folds into the ADF-H 1 domain. A phosphoserine mark is found at S143 and S277. Residues 175–313 (LQGVAFPISR…TADFLYEEVH (139 aa)) form the ADF-H 2 domain. Phosphotyrosine is present on Y309. The tract at residues 316 to 350 (QHAHKQSFAKPKGPAGKRGIRRLIRGPAETEATTD) is disordered. Position 349 is a phosphothreonine (T349).

The protein belongs to the actin-binding proteins ADF family. Twinfilin subfamily. As to quaternary structure, interacts with G-actin; ADP-actin form and capping protein (CP). May also be able to interact with TWF2 and phosphoinositides, PI(4,5)P2. When bound to PI(4,5)P2, it is down-regulated. Interacts with ACTG1. Phosphorylated on serine and threonine residues. In terms of tissue distribution, expressed at high levels in the colon, testis, ovary, prostate and lung. Expressed at lower levels in the brain, bladder and heart. Not detected in liver.

Its subcellular location is the cytoplasm. It is found in the cytoskeleton. Its function is as follows. Actin-binding protein involved in motile and morphological processes. Inhibits actin polymerization, likely by sequestering G-actin. By capping the barbed ends of filaments, it also regulates motility. Seems to play an important role in clathrin-mediated endocytosis and distribution of endocytic organelles. The sequence is that of Twinfilin-1 (TWF1) from Homo sapiens (Human).